An 896-amino-acid chain; its full sequence is MTIDKTFDPAAIEARWYAHWEDNGLFRPERPEAEPYTIVIPPPNVTGSLHIGHALDDTLQDVLIRHARLKGKDALWVVGTDHAGIATQMVVERQLDAKGQKRTDFTREQFIAKVWEWKEESGGTITRQLRRLGASCDWANERFTMDEGFSKAVLKVFVDLYNQGLLYRDKRLVNWDPGLKTAISDLEVETKEVQGSFWHFSYPLADGSGAISVATTRPETMLADMAVAVNPEDGRYRALIGKSVKLPITGRLIPIVADEHADPELGSGAVKITPGHDFNDFEVGKRAGFKPADMLNMLDAEAKVVQTADGLIPADYLGLDRFEARRKVVAAIEAEGRLEKVEDRVIQTPYGDRSNAVIEPWLTDQWYVDAETLAKPAIEAVRSGAIRVVPESWTKTYYNWLDNIQPWCVSRQLWWGHQIPAWYDADGQVYVAEDEAAASALAGGKALTRDSDVLDTWFSSALWPFGTIGWPDQAGQQPPEAYQAGAAGKASKLQRHYPNDVLISGFDILFFWDARMIMQGLHFMGEVPFRTLYLHGLVRAADGSKMSKSKGNTVDPLGLIDKYGADALRFTLTAMESQGRDIKLDEKRVEGYRNFATKLWNAARFAQGNGIGASTTIEPPAAELAVNRWIIAETVRTVQALDLAIADLRYDESANTIYQFVWASFCDWYLELIKPVLAEGADQGQAAETRAVAGWVLDQILVMLHPFMPFITEELWHALGRRDYDIIVAKWPMADARAIDPAAQQEIDWLIRMVGEVRAARTGLNVPPGARLPAYARGASEETRRRLAANAVAIARMARIDLAEGEAPAGGAAQVVVDEATYVLPLEGVIDLDAERARLAKGIAAAEKERDGLAARLGNPAFVEKAKPEAVEKARADHAEKSLEAEQLGAALARLG.

The short motif at 43 to 53 (PNVTGSLHIGH) is the 'HIGH' region element. A 'KMSKS' region motif is present at residues 545–549 (KMSKS). Lysine 548 provides a ligand contact to ATP. A coiled-coil region spans residues 831-857 (DLDAERARLAKGIAAAEKERDGLAARL).

Belongs to the class-I aminoacyl-tRNA synthetase family. ValS type 1 subfamily. Monomer.

It localises to the cytoplasm. The catalysed reaction is tRNA(Val) + L-valine + ATP = L-valyl-tRNA(Val) + AMP + diphosphate. In terms of biological role, catalyzes the attachment of valine to tRNA(Val). As ValRS can inadvertently accommodate and process structurally similar amino acids such as threonine, to avoid such errors, it has a 'posttransfer' editing activity that hydrolyzes mischarged Thr-tRNA(Val) in a tRNA-dependent manner. The protein is Valine--tRNA ligase of Rhizorhabdus wittichii (strain DSM 6014 / CCUG 31198 / JCM 15750 / NBRC 105917 / EY 4224 / RW1) (Sphingomonas wittichii).